Reading from the N-terminus, the 205-residue chain is MQRTRELESSVAIDQTEVPRSRFFIMVKKLSRVADIVYIVDTFLIPPLHPLKKQHPKVAKFLKVQLVFDLISLFIFATHQLLLLEDGNFGKHYFKRKTKRCSKFSCSRCNANAHHPKWFKFKHSLLCLGTFCFGVYSLVKINKFFKTDQTVDLNRLLELFFWQLNAILNMKLFAFYGDHLESHSAPLDVYEDSFANKSSSGGDEV.

Over 1–63 (MQRTRELESS…QHPKVAKFLK (63 aa)) the chain is Cytoplasmic. Residues 64–84 (VQLVFDLISLFIFATHQLLLL) form a helical membrane-spanning segment. Residues 85–124 (EDGNFGKHYFKRKTKRCSKFSCSRCNANAHHPKWFKFKHS) lie on the Extracellular side of the membrane. A helical membrane pass occupies residues 125–145 (LLCLGTFCFGVYSLVKINKFF). Residues 146–205 (KTDQTVDLNRLLELFFWQLNAILNMKLFAFYGDHLESHSAPLDVYEDSFANKSSSGGDEV) lie on the Cytoplasmic side of the membrane.

Its subcellular location is the membrane. This is an uncharacterized protein from Saccharomyces cerevisiae (strain ATCC 204508 / S288c) (Baker's yeast).